Reading from the N-terminus, the 1003-residue chain is Phosphatidylinositol 4,5-bisphosphate 5-phosphatase A (1003 aa).

Disordered stretches follow at residues 1 to 110 (MEGQ…AAKS) and 147 to 414 (AMPR…QPTC). The RSXSXX motif 1 signature appears at 6–11 (RSGSAR). Over residues 11 to 24 (RPGTRTGLGPLPGT) the composition is skewed to low complexity. An Asymmetric dimethylarginine; alternate modification is found at Arg56. Arg56 is modified (omega-N-methylarginine; alternate). Arg65 carries the post-translational modification Omega-N-methylarginine. Arg76 carries the asymmetric dimethylarginine modification. Arg83 is subject to Asymmetric dimethylarginine; alternate. At Arg83 the chain carries Omega-N-methylarginine; alternate. The span at 160-174 (LTPTSRDQKQLSPTS) shows a compositional bias: polar residues. Residue Ser171 is modified to Phosphoserine. Low complexity predominate over residues 180–196 (ALATSGLSLALASQEQP). The span at 197-210 (PQSPSSPSPVPSPV) shows a compositional bias: pro residues. Basic and acidic residues predominate over residues 284–294 (ARPEAPRHSPE). Residues Ser292 and Ser325 each carry the phosphoserine modification. The segment covering 338 to 348 (VPPPLPKPPRS) has biased composition (pro residues). The SH3-binding motif lies at 346-351 (PRSPSR). Low complexity-rich tracts occupy residues 349–361 (PSRS…NRSP) and 390–413 (QAQE…AQPT). The RSXSXX motif 2 motif lies at 351–356 (RSPSRS). The segment at 422–725 (ITVVTWNVGT…SDHKPVAAQF (304 aa)) is catalytic. A required for ruffle localization region spans residues 726-837 (ILQFAFRDDV…IGVTEPFQIS (112 aa)). The segment at 839-1003 (PTSESASSST…LGLEEGGLGP (165 aa)) is disordered. Low complexity predominate over residues 840–855 (TSESASSSTDSSGTSS). 2 short sequence motifs (RSXSXX motif) span residues 871-876 (RSPSPG) and 882-887 (RSRSPG). At Ser900 the chain carries Phosphoserine. Composition is skewed to low complexity over residues 907 to 919 (SRSP…QLPR) and 927 to 943 (SSSS…GLPG). An RSXSXX motif 5 motif is present at residues 908 to 913 (RSPSPQ). Ser987 is modified (phosphoserine).

This sequence belongs to the inositol 1,4,5-trisphosphate 5-phosphatase type II family.

It is found in the cytoplasm. It catalyses the reaction 1D-myo-inositol 1,4,5-trisphosphate + H2O = 1D-myo-inositol 1,4-bisphosphate + phosphate. It carries out the reaction 1D-myo-inositol 1,3,4,5-tetrakisphosphate + H2O = 1D-myo-inositol 1,3,4-trisphosphate + phosphate. The catalysed reaction is a 1,2-diacyl-sn-glycero-3-phospho-(1D-myo-inositol-4,5-bisphosphate) + H2O = a 1,2-diacyl-sn-glycero-3-phospho-(1D-myo-inositol 4-phosphate) + phosphate. Its function is as follows. Inositol 5-phosphatase, which converts inositol 1,4,5-trisphosphate to inositol 1,4-bisphosphate. Also converts phosphatidylinositol 4,5-bisphosphate to phosphatidylinositol 4-phosphate and inositol 1,3,4,5-tetrakisphosphate to inositol 1,3,4-trisphosphate in vitro. May be involved in modulation of the function of inositol and phosphatidylinositol polyphosphate-binding proteins that are present at membranes ruffles. The polypeptide is Phosphatidylinositol 4,5-bisphosphate 5-phosphatase A (Inpp5j) (Mus musculus (Mouse)).